A 202-amino-acid chain; its full sequence is Adapter protein MecA 2 (202 aa).

Belongs to the MecA family. As to quaternary structure, homodimer.

Functionally, enables the recognition and targeting of unfolded and aggregated proteins to the ClpC protease or to other proteins involved in proteolysis. Acts negatively in the development of competence by binding ComK and recruiting it to the ClpCP protease. When overexpressed, inhibits sporulation. Also involved in Spx degradation by ClpC. This chain is Adapter protein MecA 2 (mecA2), found in Bacillus anthracis.